We begin with the raw amino-acid sequence, 332 residues long: Endo-1,4-beta-xylanase B (332 aa).

Positions 2–331 (STEIPSLSAS…KDSFWRIIGQ (330 aa)) constitute a GH10 domain. The Proton donor role is filled by glutamate 134. Residue glutamate 241 is the Nucleophile of the active site.

This sequence belongs to the glycosyl hydrolase 10 (cellulase F) family. Cytoplasmic xylanase subfamily.

Its subcellular location is the cytoplasm. The catalysed reaction is Endohydrolysis of (1-&gt;4)-beta-D-xylosidic linkages in xylans.. It functions in the pathway glycan degradation; xylan degradation. Completely inhibited by Ag(2+), Cu(2+), Hg(2+), Mn(2+), Pb(2+) and Sn(2+). Strongly inhibited by Fe(2+) and Zn(2+). Co(2+) and Ni(2+) cause little inhibition while Ca(2+) and Mg(2+) do not affect enzyme activity, and Ba(2+) produces a small stimulating effect. Irreversibly inactivated by SDS in vitro. Plays a role in plant xylan biodegradation, probably via the hydrolysis of short xylooligosaccharides resulting from extracellular xylan hydrolysis, once they have been transported inside cells. Shows similar activity on xylans of different rate of arabinose or methylglucuronic substitution. Also displays high activity on aryl-xylosides. Is active on xylotetraose and xylotriose, but does not hydrolyze xylobiose, indicating that XynB is a xylanase and not a beta-xylosidase. This is Endo-1,4-beta-xylanase B (xynB) from Paenibacillus barcinonensis.